Here is a 697-residue protein sequence, read N- to C-terminus: Colicin-D (697 aa).

Residues 17 to 24 carry the TonB box motif; that stretch reads HSMVVWPS.

It belongs to the cloacin colicin family.

In terms of biological role, colicins are polypeptide toxins produced by and active against E.coli and closely related bacteria. Its function is as follows. Colicin D inhibits protein synthesis. The chain is Colicin-D (cda) from Escherichia coli.